We begin with the raw amino-acid sequence, 381 residues long: 1-deoxy-D-xylulose 5-phosphate reductoisomerase (381 aa).

Residues G13, S14, I15, N40, and N114 each coordinate NADPH. Position 115 (K115) interacts with 1-deoxy-D-xylulose 5-phosphate. E116 is an NADPH binding site. Mn(2+) is bound at residue D140. The 1-deoxy-D-xylulose 5-phosphate site is built by S141, E142, S166, and H189. E142 lines the Mn(2+) pocket. G195 contacts NADPH. Residues S202, N207, K208, and E211 each contribute to the 1-deoxy-D-xylulose 5-phosphate site. E211 is a Mn(2+) binding site.

The protein belongs to the DXR family. Requires Mg(2+) as cofactor. It depends on Mn(2+) as a cofactor.

The catalysed reaction is 2-C-methyl-D-erythritol 4-phosphate + NADP(+) = 1-deoxy-D-xylulose 5-phosphate + NADPH + H(+). It participates in isoprenoid biosynthesis; isopentenyl diphosphate biosynthesis via DXP pathway; isopentenyl diphosphate from 1-deoxy-D-xylulose 5-phosphate: step 1/6. In terms of biological role, catalyzes the NADPH-dependent rearrangement and reduction of 1-deoxy-D-xylulose-5-phosphate (DXP) to 2-C-methyl-D-erythritol 4-phosphate (MEP). The polypeptide is 1-deoxy-D-xylulose 5-phosphate reductoisomerase (Treponema denticola (strain ATCC 35405 / DSM 14222 / CIP 103919 / JCM 8153 / KCTC 15104)).